The following is a 416-amino-acid chain: Putative F-box/kelch-repeat protein At1g12870 (416 aa).

The F-box domain occupies 27 to 76; it reads MIASSSLPDDVVEEIFLKLPVKALMRFKSLSKQWRSTLESCYFSQRHLKI. 2 Kelch repeats span residues 199 to 243 and 297 to 341; these read LVWL…PASA and CMYE…HVLD.

This chain is Putative F-box/kelch-repeat protein At1g12870, found in Arabidopsis thaliana (Mouse-ear cress).